The primary structure comprises 246 residues: Ribonuclease 3 (246 aa).

Residues 16–146 form the RNase III domain; sequence ATELEAGIGY…LLAAVYLDGG (131 aa). A Mg(2+)-binding site is contributed by Glu59. Asp63 is a catalytic residue. Residues Asn132 and Glu135 each coordinate Mg(2+). Glu135 is a catalytic residue. One can recognise a DRBM domain in the interval 173-242; it reads DFKTEFQEMV…ARQVLARFAA (70 aa).

Belongs to the ribonuclease III family. Homodimer. Mg(2+) serves as cofactor.

It localises to the cytoplasm. The enzyme catalyses Endonucleolytic cleavage to 5'-phosphomonoester.. Its function is as follows. Digests double-stranded RNA. Involved in the processing of primary rRNA transcript to yield the immediate precursors to the large and small rRNAs (23S and 16S). Processes some mRNAs, and tRNAs when they are encoded in the rRNA operon. Processes pre-crRNA and tracrRNA of type II CRISPR loci if present in the organism. This is Ribonuclease 3 from Geobacter metallireducens (strain ATCC 53774 / DSM 7210 / GS-15).